A 438-amino-acid polypeptide reads, in one-letter code: Telomeric repeat-binding factor 1 (438 aa).

The span at 1-10 (MAEDVSSTAP) shows a compositional bias: polar residues. A disordered region spans residues 1–36 (MAEDVSSTAPSPRGCADGRDADPTEEQMAQTQRNDQ). Position 2 is an N-acetylalanine (A2). Residue S11 is modified to Phosphoserine. Residues 58-268 (EEEEEDSGLV…AAAKVVESKR (211 aa)) form a TRFH dimerization region. Residue K213 forms a Glycyl lysine isopeptide (Lys-Gly) (interchain with G-Cter in SUMO2) linkage. S219 is modified (phosphoserine; by ATM). Positions 265 to 378 (ESKRTRTITS…PVTPEKHRAR (114 aa)) are interaction with RLIM. The tract at residues 268–311 (RTRTITSQDKPSGNDVEMETEANLDTRKSVSDKQSAVTESSEGT) is disordered. A compositionally biased stretch (polar residues) spans 299-311 (DKQSAVTESSEGT). K325 is covalently cross-linked (Glycyl lysine isopeptide (Lys-Gly) (interchain with G-Cter in SUMO2)). Positions 326–375 (LQHGTQQQDLNKKERRVGTPQSTKKKKESRRATESRIPVSKSQPVTPEKH) are disordered. The short motif at 337-356 (KKERRVGTPQSTKKKKESRR) is the Nuclear localization signal element. Residue K366 forms a Glycyl lysine isopeptide (Lys-Gly) (interchain with G-Cter in SUMO2) linkage. The region spanning 375-432 (HRARKRQAWLWEEDKNLRSGVRKYGEGNWSKILLHYKFNNRTSVMLKDRWRTMKKLKL) is the HTH myb-type domain. Residues 403–428 (WSKILLHYKFNNRTSVMLKDRWRTMK) constitute a DNA-binding region (H-T-H motif).

Homodimer; can contain both isoforms. Found in a complex with POT1; TINF2 and TNKS1. Interacts with ATM, TINF2, TNKS1, TNKS2, PINX1, NEK2 and MAPRE1. Component of the shelterin complex (telosome) composed of TERF1, TERF2, TINF2, TERF2IP ACD and POT1. Interacts with RLIM (via N-terminus). Interacts with FBXO4. Interaction with TINF2 protects against interaction with FBXO4 and subsequent polyubiquitination and proteasomal degradation. Interacts with GNL3L; this interaction promotes homodimerization. Interacts with TIN2. Interactions with GNL3L and TIN2 are mutually exclusive. Interacts with RTEL1. Interacts with CCDC79/TERB1. Phosphorylated preferentially on Ser-219 in an ATM-dependent manner in response to ionizing DNA damage. Post-translationally, ADP-ribosylation by TNKS1 or TNKS2 diminishes its ability to bind to telomeric DNA. In terms of processing, ubiquitinated by RLIM/RNF12, leading to its degradation by the proteasome. Ubiquitinated by a SCF (SKP1-CUL1-F-box protein) ubiquitin-protein ligase complex, leading to its degradation by the proteasome.

The protein resides in the nucleus. It is found in the chromosome. Its subcellular location is the telomere. It localises to the cytoplasm. The protein localises to the cytoskeleton. The protein resides in the spindle. Binds the telomeric double-stranded 5'-TTAGGG-3' repeat and negatively regulates telomere length. Involved in the regulation of the mitotic spindle. Component of the shelterin complex (telosome) that is involved in the regulation of telomere length and protection. Shelterin associates with arrays of double-stranded 5'-TTAGGG-3' repeats added by telomerase and protects chromosome ends; without its protective activity, telomeres are no longer hidden from the DNA damage surveillance and chromosome ends are inappropriately processed by DNA repair pathways. The protein is Telomeric repeat-binding factor 1 (TERF1) of Cricetulus griseus (Chinese hamster).